Consider the following 118-residue polypeptide: Mating-type P-specific polypeptide Pc (118 aa).

The segment at residues 29–97 is a DNA-binding region (HMG box); sequence KTTIYKNGFM…VRRQIAKLER (69 aa).

Its subcellular location is the nucleus. In terms of biological role, mating type proteins are sequence specific DNA-binding proteins that act as master switches in yeast differentiation by controlling gene expression in a cell type-specific fashion. Required for conjugation and efficient meiosis. This is Mating-type P-specific polypeptide Pc (mat2-Pc) from Schizosaccharomyces pombe (Fission yeast).